The primary structure comprises 90 residues: MKRIIASLALSVFCAGLAFAADELTFKAKNGDVKFPHKKHQQVVGNCKKCHEKGPGKIEGFGKDWAHKTCKGCHEEMKKGPTKCGDCHKK.

Residues methionine 1–alanine 20 form the signal peptide. 12 residues coordinate heme: histidine 37, histidine 40, cysteine 47, cysteine 50, histidine 51, histidine 67, cysteine 70, cysteine 73, histidine 74, cysteine 84, cysteine 87, and histidine 88.

Binds 3 heme groups per subunit.

In terms of biological role, may be involved in anaerobic iron respiration. The polypeptide is Cytochrome c7 (Geobacter metallireducens (strain ATCC 53774 / DSM 7210 / GS-15)).